Reading from the N-terminus, the 153-residue chain is Endoribonuclease YbeY (153 aa).

Positions 114, 118, and 124 each coordinate Zn(2+).

Belongs to the endoribonuclease YbeY family. It depends on Zn(2+) as a cofactor.

Its subcellular location is the cytoplasm. Its function is as follows. Single strand-specific metallo-endoribonuclease involved in late-stage 70S ribosome quality control and in maturation of the 3' terminus of the 16S rRNA. This is Endoribonuclease YbeY from Shewanella baltica (strain OS185).